A 397-amino-acid polypeptide reads, in one-letter code: MKEKVVLAYSGGLDTSIIIPWLKENYDLDVIAVCVNVGQGDDMDYVKTKAIKSGASKIYVEDVKEEFVVDYLYKAIKSEALYEQDYMLGTSFARPLMAKKLVEIAHKEQAKYICHGCTGKGNDQVRFEVGVKAQDPTIKIIAPWRIWDIKSREDAIDYAKKVGVEVPVTKKKIYSVDRNLWHVSHEGGDLEDLKNEHKEDMYFMVTPPEKAKDEPTYLEIYFEKGAPVKINGEFLNPVDIIDKLNTIGGENGIGIADIIENRLVGMKSRGIYETPAGTLLYAAHKKLESVTLDKYTYQYKKLVSAQYGELVYNGLWFTALREAIDAFVDKTQENVTGTVKLKLYKGNIKPCSVDTEYALYDEGISSFGESELYSHKDAEGFINLFGLPCKIKALKNF.

Residue alanine 8–serine 16 coordinates ATP. Positions 86 and 91 each coordinate L-citrulline. Residue glycine 116 participates in ATP binding. Residues threonine 118, asparagine 122, and aspartate 123 each coordinate L-aspartate. Asparagine 122 contacts L-citrulline. Residues arginine 126, serine 175, serine 184, glutamate 260, and tyrosine 272 each coordinate L-citrulline.

This sequence belongs to the argininosuccinate synthase family. Type 1 subfamily. As to quaternary structure, homotetramer.

It localises to the cytoplasm. The catalysed reaction is L-citrulline + L-aspartate + ATP = 2-(N(omega)-L-arginino)succinate + AMP + diphosphate + H(+). Its pathway is amino-acid biosynthesis; L-arginine biosynthesis; L-arginine from L-ornithine and carbamoyl phosphate: step 2/3. This Clostridium botulinum (strain Okra / Type B1) protein is Argininosuccinate synthase.